A 161-amino-acid polypeptide reads, in one-letter code: MKLSDIADNAGSRKKRMRIGRGIGSGKGKTGGRGGKGQTARSGVRINGFEGGQMPLHRRLPKRGFNNIFRVEFAEINLDRLQDAIDAGSIDANTTINAESLVKSGVVRRAKGGVRLLGRGEIKAKLTVEVHGASKSAIAAVEKAGGTVKILAPKKDEGEAA.

The tract at residues 1–50 is disordered; the sequence is MKLSDIADNAGSRKKRMRIGRGIGSGKGKTGGRGGKGQTARSGVRINGFE. The span at 21–37 shows a compositional bias: gly residues; it reads RGIGSGKGKTGGRGGKG.

The protein belongs to the universal ribosomal protein uL15 family. In terms of assembly, part of the 50S ribosomal subunit.

Its function is as follows. Binds to the 23S rRNA. The sequence is that of Large ribosomal subunit protein uL15 from Nitrobacter winogradskyi (strain ATCC 25391 / DSM 10237 / CIP 104748 / NCIMB 11846 / Nb-255).